The following is a 303-amino-acid chain: Ribosomal RNA small subunit methyltransferase A (303 aa).

A compositionally biased stretch (low complexity) spans 1 to 19 (MSSRPPASFSATFSAARSS). Residues 1-34 (MSSRPPASFSATFSAARSSKCVPPPRRPSTDVSL) form a disordered region. S-adenosyl-L-methionine is bound by residues His-55, Leu-57, Gly-82, Glu-104, Asp-130, and Asn-149.

The protein belongs to the class I-like SAM-binding methyltransferase superfamily. rRNA adenine N(6)-methyltransferase family. RsmA subfamily.

It localises to the cytoplasm. It carries out the reaction adenosine(1518)/adenosine(1519) in 16S rRNA + 4 S-adenosyl-L-methionine = N(6)-dimethyladenosine(1518)/N(6)-dimethyladenosine(1519) in 16S rRNA + 4 S-adenosyl-L-homocysteine + 4 H(+). Functionally, specifically dimethylates two adjacent adenosines (A1518 and A1519) in the loop of a conserved hairpin near the 3'-end of 16S rRNA in the 30S particle. May play a critical role in biogenesis of 30S subunits. This chain is Ribosomal RNA small subunit methyltransferase A, found in Gluconobacter oxydans (strain 621H) (Gluconobacter suboxydans).